Reading from the N-terminus, the 296-residue chain is Protoheme IX farnesyltransferase 2 (296 aa).

Helical transmembrane passes span 7–27 (LLVA…GGYF), 36–56 (PMLL…GCVL), 83–103 (LKAA…LLWW), 108–128 (LTTA…SLWF), 134–154 (YGTL…YCAV), 163–183 (ASLL…IAIF), 207–227 (IHIV…CLGG), 229–249 (AGYG…AIAL), and 265–285 (FAFS…DFQV).

Belongs to the UbiA prenyltransferase family. Protoheme IX farnesyltransferase subfamily.

The protein localises to the cell inner membrane. It catalyses the reaction heme b + (2E,6E)-farnesyl diphosphate + H2O = Fe(II)-heme o + diphosphate. The protein operates within porphyrin-containing compound metabolism; heme O biosynthesis; heme O from protoheme: step 1/1. Converts heme B (protoheme IX) to heme O by substitution of the vinyl group on carbon 2 of heme B porphyrin ring with a hydroxyethyl farnesyl side group. The polypeptide is Protoheme IX farnesyltransferase 2 (Pseudomonas paraeruginosa (strain DSM 24068 / PA7) (Pseudomonas aeruginosa (strain PA7))).